We begin with the raw amino-acid sequence, 727 residues long: Kinesin-like protein KIN-14G (727 aa).

Disordered regions lie at residues 100-156, 172-194, and 336-357; these read QTAP…LHLR, HLSAPSRSPTPPPNAVAPSSCSR, and LAGGARSGRRDNPRRQGTGATR. Over residues 114-133 the composition is skewed to polar residues; sequence VASSTAGRASRTKSASSTGR. Residues 381–710 form the Kinesin motor domain; it reads NIRVFCRVRP…LRFAARVNSC (330 aa). ATP is bound at residue 461 to 468; the sequence is GQTGSGKT.

It belongs to the TRAFAC class myosin-kinesin ATPase superfamily. Kinesin family. KIN-14 subfamily.

The chain is Kinesin-like protein KIN-14G from Oryza sativa subsp. japonica (Rice).